Consider the following 335-residue polypeptide: Ferrochelatase (335 aa).

Positions 207 and 288 each coordinate Fe cation.

This sequence belongs to the ferrochelatase family.

It localises to the cytoplasm. It catalyses the reaction heme b + 2 H(+) = protoporphyrin IX + Fe(2+). It functions in the pathway porphyrin-containing compound metabolism; protoheme biosynthesis; protoheme from protoporphyrin-IX: step 1/1. In terms of biological role, catalyzes the ferrous insertion into protoporphyrin IX. The sequence is that of Ferrochelatase from Helicobacter pylori (strain J99 / ATCC 700824) (Campylobacter pylori J99).